The following is a 420-amino-acid chain: Dual-specificity RNA methyltransferase RlmN (420 aa).

Glu115 (proton acceptor) is an active-site residue. The Radical SAM core domain maps to 121 to 388; the sequence is DADRGTLCVS…APIRTPRGRD (268 aa). A disulfide bond links Cys128 and Cys393. [4Fe-4S] cluster contacts are provided by Cys135, Cys139, and Cys142. Residues 217-218, Ser249, 271-273, and Asn350 each bind S-adenosyl-L-methionine; these read GE and SLH. Cys393 (S-methylcysteine intermediate) is an active-site residue.

It belongs to the radical SAM superfamily. RlmN family. [4Fe-4S] cluster is required as a cofactor.

The protein localises to the cytoplasm. It carries out the reaction adenosine(2503) in 23S rRNA + 2 reduced [2Fe-2S]-[ferredoxin] + 2 S-adenosyl-L-methionine = 2-methyladenosine(2503) in 23S rRNA + 5'-deoxyadenosine + L-methionine + 2 oxidized [2Fe-2S]-[ferredoxin] + S-adenosyl-L-homocysteine. The catalysed reaction is adenosine(37) in tRNA + 2 reduced [2Fe-2S]-[ferredoxin] + 2 S-adenosyl-L-methionine = 2-methyladenosine(37) in tRNA + 5'-deoxyadenosine + L-methionine + 2 oxidized [2Fe-2S]-[ferredoxin] + S-adenosyl-L-homocysteine. In terms of biological role, specifically methylates position 2 of adenine 2503 in 23S rRNA and position 2 of adenine 37 in tRNAs. m2A2503 modification seems to play a crucial role in the proofreading step occurring at the peptidyl transferase center and thus would serve to optimize ribosomal fidelity. The polypeptide is Dual-specificity RNA methyltransferase RlmN (Sphingopyxis alaskensis (strain DSM 13593 / LMG 18877 / RB2256) (Sphingomonas alaskensis)).